Here is a 270-residue protein sequence, read N- to C-terminus: UPF0354 protein BCAH820_4810 (270 aa).

This sequence belongs to the UPF0354 family.

The protein is UPF0354 protein BCAH820_4810 of Bacillus cereus (strain AH820).